The following is a 1494-amino-acid chain: DNA-directed RNA polymerase subunit beta' (1494 aa).

4 residues coordinate Zn(2+): Cys67, Cys69, Cys82, and Cys85. Mg(2+) is bound by residues Asp499, Asp501, and Asp503. Zn(2+) contacts are provided by Cys868, Cys944, Cys951, and Cys954.

It belongs to the RNA polymerase beta' chain family. As to quaternary structure, the RNAP catalytic core consists of 2 alpha, 1 beta, 1 beta' and 1 omega subunit. When a sigma factor is associated with the core the holoenzyme is formed, which can initiate transcription. Mg(2+) serves as cofactor. The cofactor is Zn(2+).

It catalyses the reaction RNA(n) + a ribonucleoside 5'-triphosphate = RNA(n+1) + diphosphate. In terms of biological role, DNA-dependent RNA polymerase catalyzes the transcription of DNA into RNA using the four ribonucleoside triphosphates as substrates. The polypeptide is DNA-directed RNA polymerase subunit beta' (Chlorobaculum parvum (strain DSM 263 / NCIMB 8327) (Chlorobium vibrioforme subsp. thiosulfatophilum)).